A 681-amino-acid chain; its full sequence is U3 small nucleolar ribonucleoprotein protein MPP10 (681 aa).

Ser-61, Ser-120, and Ser-139 each carry phosphoserine. The segment covering Ser-105–Glu-147 has biased composition (acidic residues). 2 disordered regions span residues Ser-105 to Asp-202 and Asn-216 to Gln-364. Residues Glu-109–Val-138 adopt a coiled-coil conformation. Residues Met-148–Lys-162 show a composition bias toward basic and acidic residues. Phosphoserine is present on residues Ser-163, Ser-167, and Ser-171. Positions Leu-180 to Gly-190 are enriched in polar residues. Basic and acidic residues-rich tracts occupy residues Lys-193–Asp-202 and Asn-216–Asp-226. Residues Phe-205–Asp-239 adopt a coiled-coil conformation. A compositionally biased stretch (acidic residues) spans Asn-227 to Gly-247. Ser-242 is subject to Phosphoserine. Basic residues predominate over residues Lys-253–Leu-264. Phosphoserine is present on residues Ser-275 and Ser-289. A compositionally biased stretch (basic and acidic residues) spans Thr-280 to Asn-290. Coiled-coil stretches lie at residues Asp-284–His-324 and Asn-348–Lys-382. Residues Lys-291–Asn-318 show a composition bias toward acidic residues. Residues Glu-319–Lys-329 show a composition bias toward basic and acidic residues. Lys-350 is covalently cross-linked (Glycyl lysine isopeptide (Lys-Gly) (interchain with G-Cter in SUMO2)). The segment covering Lys-351 to Gln-364 has biased composition (basic and acidic residues). Glycyl lysine isopeptide (Lys-Gly) (interchain with G-Cter in SUMO2) cross-links involve residues Lys-382 and Lys-394. The stretch at Leu-469–Asn-490 forms a coiled coil. Lys-555 is covalently cross-linked (Glycyl lysine isopeptide (Lys-Gly) (interchain with G-Cter in SUMO2)). Basic and acidic residues predominate over residues Asn-558–Lys-575. The segment at Asn-558 to Gln-606 is disordered. The stretch at Lys-574–Val-604 forms a coiled coil. Over residues Arg-576 to Leu-598 the composition is skewed to basic residues. Lys-609 is subject to N6-acetyllysine. Glycyl lysine isopeptide (Lys-Gly) (interchain with G-Cter in SUMO2) cross-links involve residues Lys-632 and Lys-649. Residues Ser-648 to Lys-670 adopt a coiled-coil conformation. The tract at residues Asp-660–Leu-681 is disordered. The segment covering Gln-672 to Leu-681 has biased composition (basic and acidic residues).

Belongs to the MPP10 family. Part of the small subunit (SSU) processome, composed of more than 70 proteins and the RNA chaperone small nucleolar RNA (snoRNA) U3. Component of a heterotrimeric complex containing IMP3, IMP4 and MPHOSPH10. Interacts with IMP3 and IMP4. Phosphorylated in M (mitotic) phase.

Its subcellular location is the nucleus. It localises to the nucleolus. The protein localises to the chromosome. In terms of biological role, component of the 60-80S U3 small nucleolar ribonucleoprotein (U3 snoRNP). Required for the early cleavages during pre-18S ribosomal RNA processing. Part of the small subunit (SSU) processome, first precursor of the small eukaryotic ribosomal subunit. During the assembly of the SSU processome in the nucleolus, many ribosome biogenesis factors, an RNA chaperone and ribosomal proteins associate with the nascent pre-rRNA and work in concert to generate RNA folding, modifications, rearrangements and cleavage as well as targeted degradation of pre-ribosomal RNA by the RNA exosome. The chain is U3 small nucleolar ribonucleoprotein protein MPP10 from Homo sapiens (Human).